An 87-amino-acid chain; its full sequence is MANIKSAKKRIKVTETKTLNNRMVKSALKTVIKKFEAAVAGNNVEEAKTAFVAVTKSLDVAASKGVVHKNMAARKKSRLAAKLNAMA.

Belongs to the bacterial ribosomal protein bS20 family.

Binds directly to 16S ribosomal RNA. The chain is Small ribosomal subunit protein bS20 from Clostridium botulinum (strain Alaska E43 / Type E3).